A 179-amino-acid chain; its full sequence is ATP synthase subunit delta (179 aa).

Belongs to the ATPase delta chain family. As to quaternary structure, F-type ATPases have 2 components, F(1) - the catalytic core - and F(0) - the membrane proton channel. F(1) has five subunits: alpha(3), beta(3), gamma(1), delta(1), epsilon(1). F(0) has three main subunits: a(1), b(2) and c(10-14). The alpha and beta chains form an alternating ring which encloses part of the gamma chain. F(1) is attached to F(0) by a central stalk formed by the gamma and epsilon chains, while a peripheral stalk is formed by the delta and b chains.

The protein localises to the cell membrane. F(1)F(0) ATP synthase produces ATP from ADP in the presence of a proton or sodium gradient. F-type ATPases consist of two structural domains, F(1) containing the extramembraneous catalytic core and F(0) containing the membrane proton channel, linked together by a central stalk and a peripheral stalk. During catalysis, ATP synthesis in the catalytic domain of F(1) is coupled via a rotary mechanism of the central stalk subunits to proton translocation. Its function is as follows. This protein is part of the stalk that links CF(0) to CF(1). It either transmits conformational changes from CF(0) to CF(1) or is implicated in proton conduction. This chain is ATP synthase subunit delta, found in Clostridium botulinum (strain ATCC 19397 / Type A).